Here is a 439-residue protein sequence, read N- to C-terminus: Cytochrome b-c1 complex reductase subunit, mitochondrial (439 aa).

The transit peptide at 1–17 (MIRGSSALKSLTSRRLY) directs the protein to the mitochondrion.

The protein belongs to the peptidase M16 family. UQCRC1/QCR1 subfamily. Component of the ubiquinol-cytochrome c oxidoreductase (cytochrome b-c1 complex, complex III, CIII), a multisubunit enzyme composed of 10 subunits. The complex is composed of 3 respiratory subunits cytochrome b (COB), cytochrome c1 (CYT1) and Rieske protein (RIP1), 2 core protein subunits COR1 and QCR2, and 5 low-molecular weight protein subunits QCR6, QCR7, QCR8, QCR9 and QCR10. The complex exists as an obligatory dimer and forms supercomplexes (SCs) in the inner mitochondrial membrane with a monomer or a dimer of cytochrome c oxidase (complex IV, CIV), resulting in 2 different assemblies (supercomplexes III(2)IV and III(2)IV(2)).

The protein localises to the mitochondrion inner membrane. In terms of biological role, component of the ubiquinol-cytochrome c oxidoreductase, a multisubunit transmembrane complex that is part of the mitochondrial electron transport chain which drives oxidative phosphorylation. The complex plays an important role in the uptake of multiple carbon sources present in different host niches. This chain is Cytochrome b-c1 complex reductase subunit, mitochondrial, found in Candida albicans (strain SC5314 / ATCC MYA-2876) (Yeast).